Consider the following 73-residue polypeptide: Putative membrane protein insertion efficiency factor (73 aa).

This sequence belongs to the UPF0161 family.

It is found in the cell inner membrane. In terms of biological role, could be involved in insertion of integral membrane proteins into the membrane. This Neisseria meningitidis serogroup C (strain 053442) protein is Putative membrane protein insertion efficiency factor.